A 192-amino-acid polypeptide reads, in one-letter code: Glycerol-3-phosphate acyltransferase (192 aa).

Helical transmembrane passes span 4-24, 54-74, 80-100, 112-132, and 154-174; these read MFWLLATFAYLLGSLSFAILL, LAILTLLGDLCKGLLPILIAS, IAQQGWIGVCAVLGHLFPVYF, AGVLLGLYPPAAALAIAAWLL, and LLAWQEPHALLPMSVLTLLIV.

It belongs to the PlsY family. In terms of assembly, probably interacts with PlsX.

Its subcellular location is the cell inner membrane. It catalyses the reaction an acyl phosphate + sn-glycerol 3-phosphate = a 1-acyl-sn-glycero-3-phosphate + phosphate. The protein operates within lipid metabolism; phospholipid metabolism. Functionally, catalyzes the transfer of an acyl group from acyl-phosphate (acyl-PO(4)) to glycerol-3-phosphate (G3P) to form lysophosphatidic acid (LPA). This enzyme utilizes acyl-phosphate as fatty acyl donor, but not acyl-CoA or acyl-ACP. The chain is Glycerol-3-phosphate acyltransferase from Pseudomonas savastanoi pv. phaseolicola (strain 1448A / Race 6) (Pseudomonas syringae pv. phaseolicola (strain 1448A / Race 6)).